The primary structure comprises 277 residues: Phosphonoacetaldehyde hydrolase (277 aa).

Asp-20 (nucleophile) is an active-site residue. Residues Asp-20 and Ala-22 each coordinate Mg(2+). Residue Lys-61 is the Schiff-base intermediate with substrate of the active site. Asp-194 is a binding site for Mg(2+).

This sequence belongs to the HAD-like hydrolase superfamily. PhnX family. Homodimer. Requires Mg(2+) as cofactor.

The catalysed reaction is phosphonoacetaldehyde + H2O = acetaldehyde + phosphate + H(+). Involved in phosphonate degradation. The polypeptide is Phosphonoacetaldehyde hydrolase (Syntrophobacter fumaroxidans (strain DSM 10017 / MPOB)).